We begin with the raw amino-acid sequence, 321 residues long: Polygalacturonan/rhamnogalacturonan transport system permease protein YteP (321 aa).

One can recognise an ABC transmembrane type-1 domain in the interval 1 to 144; that stretch reads MKTAEAQAPA…YIPHFMSWVI (144 aa). 3 helical membrane-spanning segments follow: residues 21-41, 63-83, and 123-143; these read RKRL…ILPG, YQPF…FIRL, and IALF…MSWV.

It belongs to the binding-protein-dependent transport system permease family. The complex is probably composed of two ATP-binding proteins (MsmX), two transmembrane proteins (YtcP and YteP) and a solute-binding protein (YtcQ).

The protein localises to the cell membrane. Functionally, involved in pectin degradation. Part of the ABC transporter complex YtcQP-YteP involved in the uptake of polygalacturonan and rhamnogalacturonan type I. Responsible for the translocation of the substrate across the membrane. The sequence is that of Polygalacturonan/rhamnogalacturonan transport system permease protein YteP (yteP) from Bacillus subtilis (strain 168).